Reading from the N-terminus, the 102-residue chain is MALNEQDVARIARLALIELPPDQRGRAQAELNGILHLIERLQAVDTQGVEPLAHPLSAHEDITLRLREDAVSEQATEARRAELLANAPESADGLFLVPKVIE.

Belongs to the GatC family. Heterotrimer of A, B and C subunits.

The catalysed reaction is L-glutamyl-tRNA(Gln) + L-glutamine + ATP + H2O = L-glutaminyl-tRNA(Gln) + L-glutamate + ADP + phosphate + H(+). It carries out the reaction L-aspartyl-tRNA(Asn) + L-glutamine + ATP + H2O = L-asparaginyl-tRNA(Asn) + L-glutamate + ADP + phosphate + 2 H(+). In terms of biological role, allows the formation of correctly charged Asn-tRNA(Asn) or Gln-tRNA(Gln) through the transamidation of misacylated Asp-tRNA(Asn) or Glu-tRNA(Gln) in organisms which lack either or both of asparaginyl-tRNA or glutaminyl-tRNA synthetases. The reaction takes place in the presence of glutamine and ATP through an activated phospho-Asp-tRNA(Asn) or phospho-Glu-tRNA(Gln). In Bordetella parapertussis (strain 12822 / ATCC BAA-587 / NCTC 13253), this protein is Aspartyl/glutamyl-tRNA(Asn/Gln) amidotransferase subunit C.